Reading from the N-terminus, the 193-residue chain is dCTP deaminase (193 aa).

DCTP contacts are provided by residues 110–115 (RSSLAR), aspartate 128, 136–138 (VLE), tyrosine 171, lysine 178, and glutamine 182. Glutamate 138 functions as the Proton donor/acceptor in the catalytic mechanism.

This sequence belongs to the dCTP deaminase family. As to quaternary structure, homotrimer.

It carries out the reaction dCTP + H2O + H(+) = dUTP + NH4(+). The protein operates within pyrimidine metabolism; dUMP biosynthesis; dUMP from dCTP (dUTP route): step 1/2. In terms of biological role, catalyzes the deamination of dCTP to dUTP. In Buchnera aphidicola subsp. Acyrthosiphon pisum (strain APS) (Acyrthosiphon pisum symbiotic bacterium), this protein is dCTP deaminase.